The following is a 525-amino-acid chain: GMP synthase [glutamine-hydrolyzing] (525 aa).

Residues 9–207 (RILILDFGSQ…VRDICQCEAL (199 aa)) form the Glutamine amidotransferase type-1 domain. The Nucleophile role is filled by cysteine 86. Active-site residues include histidine 181 and glutamate 183. The GMPS ATP-PPase domain occupies 208–400 (WTPAKIIDDA…LGLPYDMLYR (193 aa)). 235 to 241 (SGGVDSS) contacts ATP.

Homodimer.

The catalysed reaction is XMP + L-glutamine + ATP + H2O = GMP + L-glutamate + AMP + diphosphate + 2 H(+). It participates in purine metabolism; GMP biosynthesis; GMP from XMP (L-Gln route): step 1/1. Its function is as follows. Catalyzes the synthesis of GMP from XMP. This chain is GMP synthase [glutamine-hydrolyzing], found in Shigella boydii serotype 18 (strain CDC 3083-94 / BS512).